Consider the following 43-residue polypeptide: CLAVATA3/ESR (CLE)-related protein 16D10 (43 aa).

Residues 1–30 form the signal peptide; sequence MFTNSIKNLIIYLMPLMVTLMLLSVSFVDA. Residues 31-43 carry the CLE motif; it reads GKKPSGPNPGGNN.

The protein belongs to the CLV3/ESR signal peptide family. Highly expressed exclusively within the subventral esophageal gland cell during syncytium formation in host plants.

Its subcellular location is the secreted. The protein resides in the host cytoplasm. It is found in the host extracellular space. Functionally, plays a role in the differentiation or division of feeding cells (syncytia) induced in plant roots during infection. Promotes host root growth. This chain is CLAVATA3/ESR (CLE)-related protein 16D10 (16D10), found in Meloidogyne arenaria (Peanut root-knot nematode).